A 237-amino-acid chain; its full sequence is GrpE protein homolog, mitochondrial (237 aa).

It belongs to the GrpE family. In terms of assembly, probable component of the PAM complex at least composed of a mitochondrial HSP70 protein, GrpE, tim-44, tim-16 and tim-14/dnj-21.

Its subcellular location is the mitochondrion matrix. In terms of biological role, essential component of the PAM complex, a complex required for the translocation of transit peptide-containing proteins from the inner membrane into the mitochondrial matrix in an ATP-dependent manner. Seems to control the nucleotide-dependent binding of mitochondrial HSP70 to substrate proteins. The chain is GrpE protein homolog, mitochondrial from Caenorhabditis elegans.